Reading from the N-terminus, the 111-residue chain is Large ribosomal subunit protein uL24 (111 aa).

Belongs to the universal ribosomal protein uL24 family. Part of the 50S ribosomal subunit.

One of two assembly initiator proteins, it binds directly to the 5'-end of the 23S rRNA, where it nucleates assembly of the 50S subunit. In terms of biological role, one of the proteins that surrounds the polypeptide exit tunnel on the outside of the subunit. The protein is Large ribosomal subunit protein uL24 of Bifidobacterium animalis subsp. lactis (strain AD011).